The sequence spans 415 residues: ATP-dependent Clp protease ATP-binding subunit ClpX (415 aa).

The ClpX-type ZB domain occupies 1 to 53 (MLRSKGDLVLGCSFCGKKEDERRRIVTGHGVSICNYCVERCAEYLRDRKPSAL). Zn(2+) is bound by residues Cys12, Cys15, Cys34, and Cys37. 118–125 (PTGSGKTL) is an ATP binding site.

This sequence belongs to the ClpX chaperone family. In terms of assembly, component of the ClpX-ClpP complex. Forms a hexameric ring that, in the presence of ATP, binds to fourteen ClpP subunits assembled into a disk-like structure with a central cavity, resembling the structure of eukaryotic proteasomes.

Functionally, ATP-dependent specificity component of the Clp protease. It directs the protease to specific substrates. Can perform chaperone functions in the absence of ClpP. In Treponema pallidum (strain Nichols), this protein is ATP-dependent Clp protease ATP-binding subunit ClpX.